Here is a 143-residue protein sequence, read N- to C-terminus: Deoxyuridine 5'-triphosphate nucleotidohydrolase (143 aa).

Substrate is bound by residues 62–64, Asn-75, and 79–81; these read RSG and TID.

It belongs to the dUTPase family. Requires Mg(2+) as cofactor.

The catalysed reaction is dUTP + H2O = dUMP + diphosphate + H(+). It participates in pyrimidine metabolism; dUMP biosynthesis; dUMP from dCTP (dUTP route): step 2/2. This enzyme is involved in nucleotide metabolism: it produces dUMP, the immediate precursor of thymidine nucleotides and it decreases the intracellular concentration of dUTP so that uracil cannot be incorporated into DNA. This is Deoxyuridine 5'-triphosphate nucleotidohydrolase from Acaryochloris marina (strain MBIC 11017).